The sequence spans 308 residues: Extended-spectrum beta-lactamase PER-1 (308 aa).

Residues 1-26 form the signal peptide; the sequence is MNVIIKAVVTASTLLMVSFSSFETSA. Residue serine 71 is the Nucleophile; acyl-ester intermediate of the active site. A beta-lactam-binding residues include lysine 74, serine 135, and glutamate 171.

This sequence belongs to the class-A beta-lactamase family. Monomer.

It is found in the secreted. It catalyses the reaction a beta-lactam + H2O = a substituted beta-amino acid. Inhibited by the beta-lactamase-blocking agents clavulanic acid, tazobactam and sulbactam. Not inhibited by EDTA. In terms of biological role, extended-spectrum beta-lactamase (ESBL) which confers resistance to penicillins, as well as first-, second- and third-generation cephalosporins, but not the carbapenem, imipenem, in the JM109 strain of E.coli. Has cefotaxime-hydrolyzing activity. In Pseudomonas aeruginosa, this protein is Extended-spectrum beta-lactamase PER-1.